A 342-amino-acid polypeptide reads, in one-letter code: Anthranilate phosphoribosyltransferase (342 aa).

5-phospho-alpha-D-ribose 1-diphosphate-binding positions include glycine 83, 86-87 (GD), threonine 91, 93-96 (NVST), 111-119 (KHGNRSVSG), and serine 123. Glycine 83 is a binding site for anthranilate. Serine 95 serves as a coordination point for Mg(2+). Asparagine 114 is a binding site for anthranilate. Residue arginine 169 coordinates anthranilate. Residues aspartate 228 and glutamate 229 each contribute to the Mg(2+) site.

It belongs to the anthranilate phosphoribosyltransferase family. Homodimer. Requires Mg(2+) as cofactor.

It carries out the reaction N-(5-phospho-beta-D-ribosyl)anthranilate + diphosphate = 5-phospho-alpha-D-ribose 1-diphosphate + anthranilate. It participates in amino-acid biosynthesis; L-tryptophan biosynthesis; L-tryptophan from chorismate: step 2/5. Its function is as follows. Catalyzes the transfer of the phosphoribosyl group of 5-phosphorylribose-1-pyrophosphate (PRPP) to anthranilate to yield N-(5'-phosphoribosyl)-anthranilate (PRA). This Halorhodospira halophila (strain DSM 244 / SL1) (Ectothiorhodospira halophila (strain DSM 244 / SL1)) protein is Anthranilate phosphoribosyltransferase.